The following is a 400-amino-acid chain: Na(+)/H(+) antiporter NhaA (400 aa).

Transmembrane regions (helical) follow at residues 26–46 (AGGI…NSPL), 71–91 (LIHW…GMEV), 107–127 (IFPA…YWFI), 137–157 (GWAI…ALLS), 166–186 (IFLL…IALF), 189–209 (HGLS…LILL), 212–232 (FKVS…ASVL), 233–253 (KSGV…PLKG), 273–293 (FVIL…GIDV), 299–319 (PLLL…IFGF), 340–360 (IFAV…LASL), and 373–393 (LSRL…YLFL).

Belongs to the NhaA Na(+)/H(+) (TC 2.A.33) antiporter family.

The protein localises to the cell inner membrane. It catalyses the reaction Na(+)(in) + 2 H(+)(out) = Na(+)(out) + 2 H(+)(in). In terms of biological role, na(+)/H(+) antiporter that extrudes sodium in exchange for external protons. The protein is Na(+)/H(+) antiporter NhaA of Haemophilus influenzae (strain PittEE).